The following is a 439-amino-acid chain: Prenyltransferase iacE (439 aa).

Substrate contacts are provided by residues 88 to 89 (WI), Glu-97, Arg-112, Lys-198, Tyr-200, Arg-271, Lys-273, and Tyr-275.

This sequence belongs to the tryptophan dimethylallyltransferase family.

It catalyses the reaction siccayne + dimethylallyl diphosphate = pestalodiol + diphosphate. It participates in secondary metabolite biosynthesis. Prenyltransferase; part of the gene cluster that mediates the biosynthesis of iso-A82775C, a enylepoxycyclohexane and biosynthetic precursor of the chloropestolide anticancer natural products. Within the cluster, the prenyltransferase iacE prenylates siccayne to generate pestalodiol E, using dimethylallyl diphosphate (DMAPP) as cosubstrate. The probable oxidoreductase iacF is then involved in the epoxidation of pestalodiol F to pestalodiol F, which is further converted to pestalofone A by the short-chain dehydrogenase/reductase iacG. Iso-A82775C is subsequently generated from pestalofone A by the short-chain dehydrogenase/reductase iacC. Iso-A82775C is further condensed with maldoxin via a Diels-Alder reaction to produce the anticancer natural products chloropestolides A to E. In Pestalotiopsis fici (strain W106-1 / CGMCC3.15140), this protein is Prenyltransferase iacE.